The sequence spans 683 residues: WD repeat-containing protein 48 homolog (683 aa).

WD repeat units lie at residues 27–82, 88–130, 133–167, 176–215, 218–257, 260–299, and 302–343; these read SNRS…PVQY, QHTD…FIDC, THKD…INAN, GCKD…KIMK, GHTD…CIAT, AHEE…KSQL, and KEEA…QLSI. The disordered stretch occupies residues 341-364; sequence LSIGGDEDGPSTSNANHSVSASSS. Positions 351–364 are enriched in low complexity; that stretch reads STSNANHSVSASSS. One copy of the WD 8 repeat lies at 389-428; it reads PGAPAIKKHAMLSDKRHVLTRDSDGNVALYDVLAARKIKD.

This sequence belongs to the WD repeat WDR48 family. Interacts with usp-46; the interaction increases the catalytic activity of usp-46 in the presence of wdr-20. In terms of tissue distribution, expressed in several head neurons and cells in the tail including the anal depressor cell.

Together with wdr-20, binds to and stimulates the activity of the deubiquitinating enzyme usp-46, leading to deubiquitination and stabilization of the glr-1 glutamate receptor. The sequence is that of WD repeat-containing protein 48 homolog (wdr-48) from Caenorhabditis elegans.